The sequence spans 118 residues: Holo-[acyl-carrier-protein] synthase (118 aa).

Mg(2+) contacts are provided by Asp5 and Glu50.

This sequence belongs to the P-Pant transferase superfamily. AcpS family. It depends on Mg(2+) as a cofactor.

It is found in the cytoplasm. It catalyses the reaction apo-[ACP] + CoA = holo-[ACP] + adenosine 3',5'-bisphosphate + H(+). Functionally, transfers the 4'-phosphopantetheine moiety from coenzyme A to a Ser of acyl-carrier-protein. This chain is Holo-[acyl-carrier-protein] synthase, found in Aliarcobacter butzleri (strain RM4018) (Arcobacter butzleri).